The following is a 325-amino-acid chain: Hydroxylase/desaturase poxK (325 aa).

The span at 1–12 shows a compositional bias: low complexity; sequence MTATATPVPTVA. The segment at 1–25 is disordered; that stretch reads MTATATPVPTVASHAQDITLPPPPK.

It belongs to the asaB hydroxylase/desaturase family.

The protein operates within secondary metabolite biosynthesis. Its function is as follows. Hydroxylase/desaturase; part of the gene cluster that mediates the biosynthesis of oxaleimides, cytotoxic compounds containing an unusual disubstituted succinimide moiety. The first step of the pathway is provided by the HR-PKS poxF that serves in a new mode of collaborative biosynthesis with the PKS-NRPS poxE, by providing the olefin containing amino acid substrate via the synthesis of an ACP-bound dec-4-enoate. The cytochrome P450 monooxygenase poxM-catalyzed oxidation at the alpha-position creates the enzyme-bound 2-hydroxydec-4-enoyl-ACP thioester, which may be prone to spontaneous hydrolysis to yield 2-hydroxydec-4-enoic acid due to increased electrophilicity of the carbonyl. 2-hydroxydec-4-enoic acid can then be further oxidized by poxM to yield the alpha-ketoacid 2-oxodec-4-enoicacid, which is reductively aminated by the aminotransferase poxL to yield (S,E)-2-aminodec-4-enoic acid. The Hybrid PKS-NRPS synthetase poxE then performs condensation between the octaketide product of its PKS modules and the amino group of (S,E)-2-aminodec-4-enoic acid which is activated and incorporated by the adenylation domain. The resulting aminoacyl product can be cyclized by the Diels-Alderase PoxQ and reductively released by the reductive (R) domain of poxE to yield an aldehyde intermediate. The released aldehyde is then substrate for a Knoevenagel condensation by the hydrolyase poxO followed by an oxidation at the 5-position of the pyrrolidone ring. The presence of the olefin from the amino acid building block allows for migration of the substituted allyl group to occur. This allylic transposition reaction takes place in a conjugate addition, semipinacol-like fashion to yield a succinimide intermediate. Iterative two-electron oxidations of the C7 methyl of the succinimide intermediate to the carboxylic acid can be catalyzed by one of two remaining cytochrome P450 monooxygenasess poxC or poxD to yield oxaleimide A. Subsequent oxidation yields the maleimide scaffold oxaleimide I. Both oxaleimide A and oxaleimide I can undergo oxidative modifications in the decalin ring to yield the series of products oxaleimides B to H. The polypeptide is Hydroxylase/desaturase poxK (Penicillium oxalicum).